Consider the following 360-residue polypeptide: Homoserine O-acetyltransferase (360 aa).

The 304-residue stretch at 41–344 (NAILICHALT…DYGHDAFLVD (304 aa)) folds into the AB hydrolase-1 domain. The Nucleophile role is filled by serine 144. Position 213 (arginine 213) interacts with substrate. Catalysis depends on residues aspartate 305 and histidine 338. Aspartate 339 serves as a coordination point for substrate.

It belongs to the AB hydrolase superfamily. MetX family. In terms of assembly, homodimer.

The protein resides in the cytoplasm. It catalyses the reaction L-homoserine + acetyl-CoA = O-acetyl-L-homoserine + CoA. It functions in the pathway amino-acid biosynthesis; L-methionine biosynthesis via de novo pathway; O-acetyl-L-homoserine from L-homoserine: step 1/1. Functionally, transfers an acetyl group from acetyl-CoA to L-homoserine, forming acetyl-L-homoserine. The sequence is that of Homoserine O-acetyltransferase from Pasteurella multocida (strain Pm70).